Consider the following 451-residue polypeptide: Glyceraldehyde-3-phosphate dehydrogenase B, chloroplastic (451 aa).

Residues 1-25 (MATHAALASTRIPTNTRFPSKTSHS) are disordered. The N-terminal 84 residues, 1-84 (MATHAALAST…STAVKGVTVA (84 aa)), are a transit peptide targeting the chloroplast. The span at 11–25 (RIPTNTRFPSKTSHS) shows a compositional bias: polar residues. Residues 95–96 (RI), Asp119, and Arg164 each bind NADP(+). Residues 238–240 (SCT), Thr269, Arg284, 297–298 (TG), and Arg320 contribute to the D-glyceraldehyde 3-phosphate site. Cys239 functions as the Nucleophile in the catalytic mechanism. Asn403 contacts NADP(+).

It belongs to the glyceraldehyde-3-phosphate dehydrogenase family. As to quaternary structure, tetramer of either four A chains (GAPDH 2) or two A and two B chains (GAPDH 1).

The protein resides in the plastid. Its subcellular location is the chloroplast. The enzyme catalyses D-glyceraldehyde 3-phosphate + phosphate + NADP(+) = (2R)-3-phospho-glyceroyl phosphate + NADPH + H(+). It functions in the pathway carbohydrate biosynthesis; Calvin cycle. The chain is Glyceraldehyde-3-phosphate dehydrogenase B, chloroplastic (GAPB) from Pisum sativum (Garden pea).